Reading from the N-terminus, the 867-residue chain is Replication origin-binding protein (867 aa).

A disordered region spans residues Met-1–Asp-39. Over residues Arg-15–Gly-28 the composition is skewed to low complexity. In terms of domain architecture, Helicase ATP-binding spans Ala-86–His-251. Ala-99–Thr-106 lines the ATP pocket.

This sequence belongs to the herpesviridae OriBP family. As to quaternary structure, homodimer. Interacts with the major DNA-binding protein ICP8. Interacts with the helicase/primase component UL8 and the polymerase accessory protein UL42.

The protein resides in the host nucleus. Its function is as follows. Functions as a docking protein to recruit essential components of the viral replication machinery to viral DNA origins. In the presence of the major DNA-binding protein, opens dsDNA leading to a conformational change in the origin that facilitates DNA unwinding and subsequent replication. This is Replication origin-binding protein from Human herpesvirus 2 (strain HG52) (HHV-2).